The primary structure comprises 120 residues: UPF0231 protein NT01EI_0766 (120 aa).

Belongs to the UPF0231 family.

The chain is UPF0231 protein NT01EI_0766 from Edwardsiella ictaluri (strain 93-146).